We begin with the raw amino-acid sequence, 298 residues long: Acetaldehyde dehydrogenase (298 aa).

6 to 9 (SGNI) lines the NAD(+) pocket. C121 serves as the catalytic Acyl-thioester intermediate. NAD(+) contacts are provided by residues 152–160 (SAGPGTRAN) and N271.

Belongs to the acetaldehyde dehydrogenase family.

It catalyses the reaction acetaldehyde + NAD(+) + CoA = acetyl-CoA + NADH + H(+). The polypeptide is Acetaldehyde dehydrogenase (Mycobacterium avium (strain 104)).